The primary structure comprises 260 residues: NH(3)-dependent NAD(+) synthetase (260 aa).

31 to 38 (GLSGGLDS) is a binding site for ATP. Asp-37 is a binding site for Mg(2+). Deamido-NAD(+) is bound at residue Arg-112. Thr-132 lines the ATP pocket. Glu-137 is a binding site for Mg(2+). ATP contacts are provided by Lys-161 and Ser-183.

The protein belongs to the NAD synthetase family. Homodimer.

It catalyses the reaction deamido-NAD(+) + NH4(+) + ATP = AMP + diphosphate + NAD(+) + H(+). It participates in cofactor biosynthesis; NAD(+) biosynthesis; NAD(+) from deamido-NAD(+) (ammonia route): step 1/1. Its function is as follows. Catalyzes the ATP-dependent amidation of deamido-NAD to form NAD. Uses ammonia as a nitrogen source. In Helicobacter pylori (strain P12), this protein is NH(3)-dependent NAD(+) synthetase.